A 231-amino-acid polypeptide reads, in one-letter code: PIAGSMILAAILLKLGGYGIIRLMQIFPTTKTDVFLPFIVLALWGAILANLTCLQQTDLKSLIAYSSISHMGLVVAAIIIQTPWGLSGAMALMIAHGFTSSALFCLANTTYERTHTRILILTRGLHNMMPMATTWWLMANLMNIAIPPSMNFTGELLILSTLFNWCPTTIIMLGLSMLITASYSLHMFLSTQMGPTLINNLTEPTHSREHLLMTLHLIPLLMISFKPELVT.

7 helical membrane passes run 1–21 (PIAG…YGII), 34–54 (VFLP…LTCL), 63–85 (IAYS…TPWG), 89–111 (AMAL…NTTY), 128–148 (MMPM…AIPP), 169–189 (TIIM…HMFL), and 211–231 (LLMT…ELVT).

Belongs to the complex I subunit 4 family.

The protein localises to the mitochondrion membrane. The catalysed reaction is a ubiquinone + NADH + 5 H(+)(in) = a ubiquinol + NAD(+) + 4 H(+)(out). In terms of biological role, core subunit of the mitochondrial membrane respiratory chain NADH dehydrogenase (Complex I) that is believed to belong to the minimal assembly required for catalysis. Complex I functions in the transfer of electrons from NADH to the respiratory chain. The immediate electron acceptor for the enzyme is believed to be ubiquinone. This Sistrurus miliarius (Pigmy rattlesnake) protein is NADH-ubiquinone oxidoreductase chain 4 (MT-ND4).